The sequence spans 240 residues: Cysteine-rich venom protein (240 aa).

Positions 1–19 (MIAFIVLPILAAVLHQSSG) are cleaved as a signal peptide. An SCP domain is found at 39–166 (DLHNSLRRSV…KYRYFYVCQY (128 aa)). Disulfide bonds link C75–C153, C92–C167, C148–C164, C186–C193, C189–C198, C202–C235, C211–C229, and C220–C233. Residues 202–235 (CTQENTYSNCNSLVQQSSCQDNNMKTKCPASCFC) enclose the ShKT domain.

It belongs to the CRISP family. In terms of tissue distribution, expressed by the venom gland.

It localises to the secreted. In terms of biological role, may block ryanodine receptors (RYR). The protein is Cysteine-rich venom protein of Protobothrops mucrosquamatus (Taiwan habu).